The following is a 300-amino-acid chain: Geranylgeranyl pyrophosphate synthase (300 aa).

The residue at position 1 (M1) is an N-acetylmethionine. Isopentenyl diphosphate-binding residues include K25, R28, and H57. Mg(2+)-binding residues include D64 and D68. R73 contributes to the dimethylallyl diphosphate binding site. R74 is a binding site for isopentenyl diphosphate. K151, T152, Q185, K202, and K212 together coordinate dimethylallyl diphosphate.

This sequence belongs to the FPP/GGPP synthase family. As to quaternary structure, homohexamer; trimer of homodimers. Mg(2+) serves as cofactor.

The protein resides in the cytoplasm. Its subcellular location is the perinuclear region. The protein localises to the myofibril. It is found in the sarcomere. It localises to the z line. The catalysed reaction is isopentenyl diphosphate + dimethylallyl diphosphate = (2E)-geranyl diphosphate + diphosphate. The enzyme catalyses isopentenyl diphosphate + (2E)-geranyl diphosphate = (2E,6E)-farnesyl diphosphate + diphosphate. It catalyses the reaction isopentenyl diphosphate + (2E,6E)-farnesyl diphosphate = (2E,6E,10E)-geranylgeranyl diphosphate + diphosphate. Its pathway is isoprenoid biosynthesis; farnesyl diphosphate biosynthesis; farnesyl diphosphate from geranyl diphosphate and isopentenyl diphosphate: step 1/1. It participates in isoprenoid biosynthesis; geranyl diphosphate biosynthesis; geranyl diphosphate from dimethylallyl diphosphate and isopentenyl diphosphate: step 1/1. It functions in the pathway isoprenoid biosynthesis; geranylgeranyl diphosphate biosynthesis; geranylgeranyl diphosphate from farnesyl diphosphate and isopentenyl diphosphate: step 1/1. Catalyzes the trans-addition of the three molecules of IPP onto DMAPP to form geranylgeranyl pyrophosphate, an important precursor of carotenoids and geranylated proteins. The sequence is that of Geranylgeranyl pyrophosphate synthase (GGPS1) from Bos taurus (Bovine).